The primary structure comprises 217 residues: Nitrile hydratase subunit beta (217 aa).

It belongs to the nitrile hydratase subunit beta family. Heterodimer of an alpha and a beta chain.

The enzyme catalyses an aliphatic primary amide = an aliphatic nitrile + H2O. Functionally, NHase catalyzes the hydration of various nitrile compounds to the corresponding amides. This chain is Nitrile hydratase subunit beta (nthB), found in Pseudomonas putida (Arthrobacter siderocapsulatus).